A 284-amino-acid polypeptide reads, in one-letter code: Proteasome subunit pbs-5 (284 aa).

Positions 1 to 64 are cleaved as a propeptide — removed in mature form; that stretch reads MWGETFDDFE…AGKSMQFRKG (64 aa). Residue T65 is the Nucleophile of the active site.

The protein belongs to the peptidase T1B family. In terms of assembly, the 26S proteasome consists of a 20S proteasome core and two 19S regulatory subunits. The 20S proteasome core is composed of 28 subunits that are arranged in four stacked rings, resulting in a barrel-shaped structure. The two end rings are each formed by seven alpha subunits, and the two central rings are each formed by seven beta subunits. The catalytic chamber with the active sites is on the inside of the barrel.

It localises to the cytoplasm. Its subcellular location is the nucleus. The catalysed reaction is Cleavage of peptide bonds with very broad specificity.. Its function is as follows. Component of the 20S core proteasome complex involved in the proteolytic degradation of most intracellular proteins. This complex plays numerous essential roles within the cell by associating with different regulatory particles. Associated with two 19S regulatory particles, forms the 26S proteasome and thus participates in the ATP-dependent degradation of ubiquitinated proteins. The 26S proteasome plays a key role in the maintenance of protein homeostasis by removing misfolded or damaged proteins that could impair cellular functions, and by removing proteins whose functions are no longer required. The chain is Proteasome subunit pbs-5 from Caenorhabditis elegans.